Reading from the N-terminus, the 178-residue chain is Bifunctional protein PyrR (178 aa).

Residues 41-42 (RR), 103-111 (DDVLYTGRT), and arginine 136 contribute to the substrate site. The PRPP-binding motif lies at 99 to 111 (VILVDDVLYTGRT).

The protein belongs to the purine/pyrimidine phosphoribosyltransferase family. PyrR subfamily. In terms of assembly, homodimer and homohexamer; in equilibrium.

It catalyses the reaction UMP + diphosphate = 5-phospho-alpha-D-ribose 1-diphosphate + uracil. Its function is as follows. Regulates transcriptional attenuation of the pyrimidine nucleotide (pyr) operon by binding in a uridine-dependent manner to specific sites on pyr mRNA. This disrupts an antiterminator hairpin in the RNA and favors formation of a downstream transcription terminator, leading to a reduced expression of downstream genes. In terms of biological role, also displays a weak uracil phosphoribosyltransferase activity which is not physiologically significant. This chain is Bifunctional protein PyrR, found in Clostridium acetobutylicum (strain ATCC 824 / DSM 792 / JCM 1419 / IAM 19013 / LMG 5710 / NBRC 13948 / NRRL B-527 / VKM B-1787 / 2291 / W).